Reading from the N-terminus, the 497-residue chain is Glycine receptor subunit beta (497 aa).

Residues 1–22 (MKFLLTTAFLILISLWVEEAYS) form the signal peptide. The Extracellular segment spans residues 23–268 (KEKSSKKGKG…IFTLRRQVGF (246 aa)). A glycan (N-linked (GlcNAc...) asparagine) is linked at asparagine 54. Residues arginine 108 and serine 174 each contribute to the glycine site. Cysteine 183 and cysteine 197 are joined by a disulfide. Residue asparagine 242 is glycosylated (N-linked (GlcNAc...) asparagine). Cysteine 243 and cysteine 255 are joined by a disulfide. Threonine 250 lines the glycine pocket. The chain crosses the membrane as a helical span at residues 269–289 (YMMGVYAPTLLIVVLSWLSFW). The Cytoplasmic segment spans residues 290–294 (INPDA). The chain crosses the membrane as a helical span at residues 295 to 315 (SAARVPLGIFSVLSLASECTT). Over 316-327 (LAAELPKVSYVK) the chain is Extracellular. A helical membrane pass occupies residues 328-349 (ALDVWLIACLLFGFASLVEYAV). Topologically, residues 350 to 472 (VQVMLNNPKR…KPVIPTAAKR (123 aa)) are cytoplasmic. Phosphothreonine is present on threonine 391. A helical membrane pass occupies residues 473–496 (IDLYARALFPFCFLFFNVIYWSIY).

Belongs to the ligand-gated ion channel (TC 1.A.9) family. Glycine receptor (TC 1.A.9.3) subfamily. GLRB sub-subfamily. In terms of assembly, forms heteropentamers with glycin receptor alpha subunits. Heteropentamers with GLRA1 can be composed of two GLRA1 and three GLRB subunits, or three GLRA1 and two GLRB subunits, or four GLRA1 subunits and one GLRB subunit. Forms heteropentamers with GLRA2. Functional GLRB-GLRA2 heteropentamers contain four GLRA2 subunits and one GLRB subunit, although alternative subunit composition cannot be excluded. Forms a heteropentamer with GLRA3. Interacts with GPHN.

It is found in the postsynaptic cell membrane. The protein resides in the synapse. Its subcellular location is the cell projection. It localises to the dendrite. The protein localises to the cell membrane. It is found in the cytoplasm. It catalyses the reaction chloride(in) = chloride(out). Its activity is regulated as follows. Channel opening is triggered by extracellular glycine. Heteropentameric channels composed of GLRB and GLRA1 are activated by lower glycine levels than homopentameric GLRA1. In terms of biological role, subunit of heteromeric glycine-gated chloride channels. Plays an important role in the down-regulation of neuronal excitability. Contributes to the generation of inhibitory postsynaptic currents. The chain is Glycine receptor subunit beta (GLRB) from Homo sapiens (Human).